Reading from the N-terminus, the 150-residue chain is Macrodomain Ter protein (150 aa).

Belongs to the MatP family. Homodimer.

Its subcellular location is the cytoplasm. In terms of biological role, required for spatial organization of the terminus region of the chromosome (Ter macrodomain) during the cell cycle. Prevents early segregation of duplicated Ter macrodomains during cell division. Binds specifically to matS, which is a 13 bp signature motif repeated within the Ter macrodomain. The polypeptide is Macrodomain Ter protein (Citrobacter koseri (strain ATCC BAA-895 / CDC 4225-83 / SGSC4696)).